A 200-amino-acid chain; its full sequence is Recombination protein RecR (200 aa).

A C4-type zinc finger spans residues 57-72; that stretch reads CRQCRTLTEQELCPQC. The 96-residue stretch at 80–175 folds into the Toprim domain; that stretch reads TQLCVVEGPT…AATRIAHGVP (96 aa).

This sequence belongs to the RecR family.

In terms of biological role, may play a role in DNA repair. It seems to be involved in an RecBC-independent recombinational process of DNA repair. It may act with RecF and RecO. This chain is Recombination protein RecR, found in Pseudomonas putida (strain GB-1).